The sequence spans 267 residues: MVTMRDLLECGVHFGHQTRRWNPKMKKFIFGERKGIYIIDLQKTIRYFRYTYNIVRDAAAEGKTILFVGTKKQAGAAIKEFAEKCEMPYVNHRWLGGMLTNFDTIKQSIRKLEVIEQMETDGSMDLLTKKEAGMLKSKKAKLELYLGGIRNMKNLPDMVFVIDCVKEKIAVKEANRLGMPVIAPLDTNCDPDVVDFPIPGNDDAIRSIQLFCQEMSEAINEGKALRDQDSEEEIQNKEQDEVSQEEKDDILDEAMNEEDFEIPEDKE.

The segment at Gly222 to Glu267 is disordered. The span at Lys223–Asp240 shows a compositional bias: basic and acidic residues. Positions Glu241–Glu267 are enriched in acidic residues.

The protein belongs to the universal ribosomal protein uS2 family.

This Campylobacter hominis (strain ATCC BAA-381 / DSM 21671 / CCUG 45161 / LMG 19568 / NCTC 13146 / CH001A) protein is Small ribosomal subunit protein uS2.